The following is a 427-amino-acid chain: UPF0229 protein KPN78578_11640 (427 aa).

Residues 72-109 form a disordered region; the sequence is RNRVHPGNDHFVQNDRIERPQGGGGGGGSGQGQASADG. Residues 77–90 are compositionally biased toward basic and acidic residues; the sequence is PGNDHFVQNDRIER. The segment covering 92-102 has biased composition (gly residues); sequence QGGGGGGGSGQ.

This sequence belongs to the UPF0229 family.

The protein is UPF0229 protein KPN78578_11640 of Klebsiella pneumoniae subsp. pneumoniae (strain ATCC 700721 / MGH 78578).